Consider the following 361-residue polypeptide: DNA replication and repair protein RecF (361 aa).

G30–T37 contributes to the ATP binding site.

The protein belongs to the RecF family.

The protein resides in the cytoplasm. Its function is as follows. The RecF protein is involved in DNA metabolism; it is required for DNA replication and normal SOS inducibility. RecF binds preferentially to single-stranded, linear DNA. It also seems to bind ATP. In Yersinia pseudotuberculosis serotype O:1b (strain IP 31758), this protein is DNA replication and repair protein RecF.